The chain runs to 447 residues: Phosphoglucosamine mutase (447 aa).

The active-site Phosphoserine intermediate is S108. The Mg(2+) site is built by S108, D247, D249, and D251. S108 is modified (phosphoserine).

The protein belongs to the phosphohexose mutase family. Mg(2+) is required as a cofactor. In terms of processing, activated by phosphorylation.

It catalyses the reaction alpha-D-glucosamine 1-phosphate = D-glucosamine 6-phosphate. In terms of biological role, catalyzes the conversion of glucosamine-6-phosphate to glucosamine-1-phosphate. The sequence is that of Phosphoglucosamine mutase from Bordetella avium (strain 197N).